The chain runs to 201 residues: Holliday junction resolvase RecU (201 aa).

Residues threonine 85, aspartate 87, glutamate 100, and glutamine 119 each contribute to the Mg(2+) site.

The protein belongs to the RecU family. It depends on Mg(2+) as a cofactor.

Its subcellular location is the cytoplasm. The enzyme catalyses Endonucleolytic cleavage at a junction such as a reciprocal single-stranded crossover between two homologous DNA duplexes (Holliday junction).. Endonuclease that resolves Holliday junction intermediates in genetic recombination. Cleaves mobile four-strand junctions by introducing symmetrical nicks in paired strands. Promotes annealing of linear ssDNA with homologous dsDNA. Required for DNA repair, homologous recombination and chromosome segregation. In Geobacillus thermodenitrificans (strain NG80-2), this protein is Holliday junction resolvase RecU.